The chain runs to 362 residues: Aminomethyltransferase (362 aa).

The protein belongs to the GcvT family. The glycine cleavage system is composed of four proteins: P, T, L and H.

The enzyme catalyses N(6)-[(R)-S(8)-aminomethyldihydrolipoyl]-L-lysyl-[protein] + (6S)-5,6,7,8-tetrahydrofolate = N(6)-[(R)-dihydrolipoyl]-L-lysyl-[protein] + (6R)-5,10-methylene-5,6,7,8-tetrahydrofolate + NH4(+). Functionally, the glycine cleavage system catalyzes the degradation of glycine. This is Aminomethyltransferase from Chromobacterium violaceum (strain ATCC 12472 / DSM 30191 / JCM 1249 / CCUG 213 / NBRC 12614 / NCIMB 9131 / NCTC 9757 / MK).